The chain runs to 226 residues: Ribonuclease 3 (226 aa).

In terms of domain architecture, RNase III spans 6–128 (INRLQRKLGY…LIGGVFLDSD (123 aa)). Mg(2+) is bound at residue Glu-41. Asp-45 is a catalytic residue. Asp-114 and Glu-117 together coordinate Mg(2+). The active site involves Glu-117. The DRBM domain occupies 155-225 (DPKTRLQEYL…AEQALKMLEL (71 aa)).

Belongs to the ribonuclease III family. As to quaternary structure, homodimer. Mg(2+) serves as cofactor.

It is found in the cytoplasm. It carries out the reaction Endonucleolytic cleavage to 5'-phosphomonoester.. In terms of biological role, digests double-stranded RNA. Involved in the processing of primary rRNA transcript to yield the immediate precursors to the large and small rRNAs (23S and 16S). Processes some mRNAs, and tRNAs when they are encoded in the rRNA operon. Processes pre-crRNA and tracrRNA of type II CRISPR loci if present in the organism. The sequence is that of Ribonuclease 3 from Enterobacter sp. (strain 638).